The chain runs to 1063 residues: Structural polyprotein (1063 aa).

The tract at residues 23 to 131 (LRAELAAGAS…LGPPTNPFQA (109 aa)) is disordered. Residues 30–69 (GASQLRRPRPPRQRDSSTSGDDSGRDSGGPRRRRGNRGRG) form a human C1QBP/SF2P32-binding region. Ser-46 carries the phosphoserine; by host modification. Positions 59 to 69 (PRRRRGNRGRG) are enriched in basic residues. Basic and acidic residues predominate over residues 70-87 (QRKDWSKAPPPPEERQES). The segment covering 93-107 (APKPPRAPPQPPQPP) has biased composition (pro residues). An intrachain disulfide couples Cys-153 to Cys-197. The functions as E2 signal peptide stretch occupies residues 279 to 300 (GAPQVFLAGLLLAAVAVGTARA). Residues 301–534 (GLQPRTDIAA…LWLATANALS (234 aa)) are Extracellular-facing. A disordered region spans residues 305 to 327 (RTDIAAPPAPPQAPRAHGKHYGH). Residues Asn-353, Asn-371, Asn-410, and Asn-429 are each glycosylated (N-linked (GlcNAc...) asparagine; by host). A helical transmembrane segment spans residues 535–555 (LDHALAAVVLLVPWVLIFMLC). The Cytoplasmic portion of the chain corresponds to 556 to 582 (RRACRRRGAAAALTAVVLQGYNPPAYG). The segment at 563-582 (GAAAALTAVVLQGYNPPAYG) is functions as E1 signal peptide. At 583–1028 (EEAFTYLCTA…QTWAEWAAAH (446 aa)) the chain is on the extracellular side. 8 cysteine pairs are disulfide-bonded: Cys-590–Cys-595, Cys-619–Cys-824, Cys-641–Cys-653, Cys-699–Cys-712, Cys-758–Cys-767, Cys-807–Cys-817, Cys-931–Cys-934, and Cys-950–Cys-983. N-linked (GlcNAc...) asparagine; by host glycosylation is present at Asn-658. Ca(2+)-binding residues include Asn-670 and Ala-671. Ca(2+) contacts are provided by Asp-718 and Thr-719. Residues Asn-759 and Asn-791 are each glycosylated (N-linked (GlcNAc...) asparagine; by host). O-linked (GalNAc...) threonine; by host glycans are attached at residues Thr-1011 and Thr-1012. The chain crosses the membrane as a helical span at residues 1029–1049 (WWQLTLGAICALLLAGLLACC). Residues 1050-1063 (AKCLYYLRGAIAPR) lie on the Extracellular side of the membrane.

Homodimer; further assembles into homooligomer. Interacts with human C1QBP. Interacts (via N-terminus) with protease/methyltransferase p150. In terms of assembly, heterodimer with spike glycoprotein E2. As to quaternary structure, heterodimer with spike glycoprotein E1. Structural polyprotein: Specific enzymatic cleavages in vivo yield mature proteins. Two signal peptidase-mediated cleavages within the polyprotein produce the structural proteins capsid, E2, and E1. The E2 signal peptide remains attached to the C-terminus of the capsid protein after cleavage by the signal peptidase. Another signal peptide at E2 C-terminus directs E1 to the ER, with a similar mechanism. In terms of processing, contains three N-linked oligosaccharides. Post-translationally, capsid is phosphorylated on Ser-46 by host. This phosphorylation negatively regulates capsid protein RNA-binding activity. Dephosphorylated by human PP1A.

Its subcellular location is the virion. It is found in the host cytoplasm. The protein localises to the host mitochondrion. It localises to the virion membrane. The protein resides in the host Golgi apparatus membrane. In terms of biological role, capsid protein interacts with genomic RNA and assembles into icosahedric core particles 65-70 nm in diameter. The resulting nucleocapsid eventually associates with the cytoplasmic domain of E2 at the cell membrane, leading to budding and formation of mature virions from host Golgi membranes. Phosphorylation negatively regulates RNA-binding activity, possibly delaying virion assembly during the viral replication phase. Capsid protein dimerizes and becomes disulfide-linked in the virion. Modulates genomic RNA replication. Modulates subgenomic RNA synthesis by interacting with human C1QBP/SF2P32. Induces both perinuclear clustering of mitochondria and the formation of electron-dense intermitochondrial plaques, both hallmarks of rubella virus infected cells. Induces apoptosis when expressed in transfected cells. Its function is as follows. Responsible for viral attachment to target host cell, by binding to the cell receptor. Its transport to the plasma membrane depends on interaction with E1 protein. The surface glycoproteins display an irregular helical organization and a pseudo-tetrameric inner nucleocapsid arrangement. Functionally, class II viral fusion protein. Fusion activity is inactive as long as E1 is bound to E2 in mature virion. After virus attachment to target cell and clathrin-mediated endocytosis, acidification of the endosome would induce dissociation of E1/E2 heterodimer and concomitant trimerization of the E1 subunits. This E1 homotrimer is fusion active, and promotes release of viral nucleocapsid in cytoplasm after endosome and viral membrane fusion. The cytoplasmic tail of spike glycoprotein E1 modulates virus release. The surface glycoproteins display an irregular helical organization and a pseudo-tetrameric inner nucleocapsid arrangement. This Rubella virus (strain BRD1) (RUBV) protein is Structural polyprotein.